A 162-amino-acid polypeptide reads, in one-letter code: Glutathione peroxidase-like peroxiredoxin 2 (162 aa).

The Cysteine sulfenic acid (-SOH) intermediate role is filled by Cys37. Cys37 and Cys83 form a disulfide bridge.

Belongs to the glutathione peroxidase family. In terms of assembly, monomer.

It is found in the cytoplasm. It localises to the nucleus. Its subcellular location is the mitochondrion outer membrane. The protein resides in the mitochondrion inner membrane. The catalysed reaction is a hydroperoxide + [thioredoxin]-dithiol = an alcohol + [thioredoxin]-disulfide + H2O. Its function is as follows. Glutathione peroxidase-like protein that protects cells from phospholipid hydroperoxides and nonphospholipid peroxides during oxidative stress. Plays an important role in the oxidative stress-induced response in the presence of Ca(2+). Has peroxidase activity using preferentially thioredoxin as a reducing power. The redox state of the mitochondrial GPX2 is regulated by TRX1 and TRX2 (cytoplasmic thioredoxin), and by TRX3 (mitochondrial matrix thioredoxin). Involved in sporulation. The polypeptide is Glutathione peroxidase-like peroxiredoxin 2 (Saccharomyces cerevisiae (strain ATCC 204508 / S288c) (Baker's yeast)).